The chain runs to 150 residues: Small ribosomal subunit protein uS7c (150 aa).

It belongs to the universal ribosomal protein uS7 family. In terms of assembly, part of the 30S ribosomal subunit.

Its subcellular location is the plastid. The protein localises to the chloroplast. Functionally, one of the primary rRNA binding proteins, it binds directly to 16S rRNA where it nucleates assembly of the head domain of the 30S subunit. This Huperzia lucidula (Shining clubmoss) protein is Small ribosomal subunit protein uS7c (rps7).